Here is a 644-residue protein sequence, read N- to C-terminus: DNA mismatch repair protein MutL (644 aa).

Over residues lysine 340–glutamate 360 the composition is skewed to basic and acidic residues. Residues lysine 340–threonine 425 form a disordered region. Low complexity predominate over residues glutamine 387–glutamine 400. Residues glutamate 416 to threonine 425 are compositionally biased toward basic and acidic residues.

Belongs to the DNA mismatch repair MutL/HexB family.

In terms of biological role, this protein is involved in the repair of mismatches in DNA. It is required for dam-dependent methyl-directed DNA mismatch repair. May act as a 'molecular matchmaker', a protein that promotes the formation of a stable complex between two or more DNA-binding proteins in an ATP-dependent manner without itself being part of a final effector complex. The sequence is that of DNA mismatch repair protein MutL from Bacillus mycoides (strain KBAB4) (Bacillus weihenstephanensis).